We begin with the raw amino-acid sequence, 304 residues long: Acetylglutamate kinase (304 aa).

Residues glycine 74–glycine 75, arginine 96, and asparagine 201 each bind substrate.

The protein belongs to the acetylglutamate kinase family. ArgB subfamily.

It is found in the cytoplasm. The catalysed reaction is N-acetyl-L-glutamate + ATP = N-acetyl-L-glutamyl 5-phosphate + ADP. It participates in amino-acid biosynthesis; L-arginine biosynthesis; N(2)-acetyl-L-ornithine from L-glutamate: step 2/4. Functionally, catalyzes the ATP-dependent phosphorylation of N-acetyl-L-glutamate. This Alkalilimnicola ehrlichii (strain ATCC BAA-1101 / DSM 17681 / MLHE-1) protein is Acetylglutamate kinase.